The chain runs to 81 residues: Protein PYP1 (81 aa).

A chloroplast-targeting transit peptide spans 1–25 (MAFVSGFTGMPVTARVSKAVCRTRM). The interval 27–57 (LEGGKSSGGGEATRDPEPTAVDPNDPKGKQQ) is disordered.

Its subcellular location is the plastid. The protein resides in the chloroplast. The chain is Protein PYP1 from Pyropia yezoensis (Susabi-nori).